Reading from the N-terminus, the 154-residue chain is Myoglobin (154 aa).

Residues 2–148 (GLSDGEWQLV…FRNDMAAKYK (147 aa)) enclose the Globin domain. The residue at position 4 (S4) is a Phosphoserine. A nitrite-binding site is contributed by H65. Residue H65 participates in O2 binding. The residue at position 68 (T68) is a Phosphothreonine. H94 contacts heme b.

Belongs to the globin family. In terms of assembly, monomeric.

It localises to the cytoplasm. The protein resides in the sarcoplasm. It catalyses the reaction Fe(III)-heme b-[protein] + nitric oxide + H2O = Fe(II)-heme b-[protein] + nitrite + 2 H(+). The enzyme catalyses H2O2 + AH2 = A + 2 H2O. Its function is as follows. Monomeric heme protein which primary function is to store oxygen and facilitate its diffusion within muscle tissues. Reversibly binds oxygen through a pentacoordinated heme iron and enables its timely and efficient release as needed during periods of heightened demand. Depending on the oxidative conditions of tissues and cells, and in addition to its ability to bind oxygen, it also has a nitrite reductase activity whereby it regulates the production of bioactive nitric oxide. Under stress conditions, like hypoxia and anoxia, it also protects cells against reactive oxygen species thanks to its pseudoperoxidase activity. The chain is Myoglobin (MB) from Didelphis virginiana (North American opossum).